The sequence spans 857 residues: Gelation factor (857 aa).

Met1 is modified (blocked amino end (Met)). The actin-binding stretch occupies residues 1–250; it reads MAAAPSGKTW…EKKRRETSDA (250 aa). 2 consecutive Calponin-homology (CH) domains span residues 12–117 and 125–227; these read DVQK…LRYQ and NSPK…DYAL. The tract at residues 229–246 is regulatory site; sequence KEKRDADALAALEKKRRE. Filamin repeat units lie at residues 245–346, 347–446, 447–545, 546–645, 646–747, and 763–837; these read RETS…NVKI, DGSD…EVKI, LNSD…SIHI, KPAA…TVTV, KPAP…DVKC, and FTVA…KQVL. Residues 832-857 form a disordered region; it reads PFKQVLGNPGKKNPEVKSFTTTRTAN.

In terms of assembly, homodimer.

F-actin cross-linking protein. In Dictyostelium discoideum (Social amoeba), this protein is Gelation factor (abpC).